A 114-amino-acid polypeptide reads, in one-letter code: Superoxide dismutase [Cu-Zn] (114 aa).

3 residues coordinate Cu cation: H37, H39, and H54. Positions 49 to 73 (MSSGPHYNPRNKEHGAPTDENRHLG) are disordered. Residues H54, H62, H71, and D74 each contribute to the Zn(2+) site. The segment covering 58–73 (RNKEHGAPTDENRHLG) has biased composition (basic and acidic residues). H111 is a binding site for Cu cation.

Belongs to the Cu-Zn superoxide dismutase family. As to quaternary structure, homodimer. Requires Cu cation as cofactor. The cofactor is Zn(2+).

The protein localises to the cytoplasm. The catalysed reaction is 2 superoxide + 2 H(+) = H2O2 + O2. Its function is as follows. Destroys radicals which are normally produced within the cells and which are toxic to biological systems. The polypeptide is Superoxide dismutase [Cu-Zn] (Drosophila madeirensis (Fruit fly)).